The primary structure comprises 792 residues: Ubiquitin carboxyl-terminal hydrolase 10 (792 aa).

Positions 2-27 (TTQESIKPLVDRILSNPLQFNAAMIS) are DHR2-binding module. Disordered stretches follow at residues 64–87 (AESK…NTVP) and 103–320 (KDAA…SITP). Residues 107-129 (DATGAKKSAELSTELSTEPPSSS) are compositionally biased toward low complexity. Residues 109 to 145 (TGAKKSAELSTELSTEPPSSSSEDDKVGKEEEEEGEI) are SIR4-binding module. A compositionally biased stretch (basic and acidic residues) spans 144–171 (EIFHEARDYVEPRKASLKERDNADKGDG). The tract at residues 167-208 (DKGDGEDIGEDIGEDIGEDIGEDIGEDIGENLGSPLATIDDS) is UTP22-binding module. The segment covering 172–195 (EDIGEDIGEDIGEDIGEDIGEDIG) has biased composition (acidic residues). Over residues 211–220 (ENEKEKRKEL) the composition is skewed to basic and acidic residues. Residues 226 to 241 (SDDEIEDDEDEDDMDY) show a composition bias toward acidic residues. Residues 288 to 297 (VNNTKENGNR) show a composition bias toward polar residues. A USP domain is found at 362–733 (RGLLNHGVTC…NAYYLLYTRL (372 aa)). Residue Cys371 is the Nucleophile of the active site. A disordered region spans residues 526–563 (LDPNSDLSSDSINGTSATTSTTTSNAATKPSLSSSSSV). Polar residues predominate over residues 530–539 (SDLSSDSING). The segment covering 540–563 (TSATTSTTTSNAATKPSLSSSSSV) has biased composition (low complexity). His691 acts as the Proton acceptor in catalysis. Over residues 749–766 (TGNVTSKSKQEQAVNEPN) the composition is skewed to polar residues. The interval 749–792 (TGNVTSKSKQEQAVNEPNNRPLKINSKKNNRKKWKKNKKRKFTK) is disordered. Residues 773–792 (NSKKNNRKKWKKNKKRKFTK) show a composition bias toward basic residues.

The protein belongs to the peptidase C19 family. As to quaternary structure, interacts with SIR4. Interacts with the proliferating-cell nuclear antigen PCNA/POL30. Interacts with DHR2 and UTP22.

The protein localises to the nucleus. It is found in the chromosome. It localises to the telomere. Its subcellular location is the nucleolus. It catalyses the reaction Thiol-dependent hydrolysis of ester, thioester, amide, peptide and isopeptide bonds formed by the C-terminal Gly of ubiquitin (a 76-residue protein attached to proteins as an intracellular targeting signal).. Its function is as follows. Deubiquitinating enzyme involved in telomere and HM loci silencing, which is the repression of chromatin structure which leads to a stop in the transcription of nearby genes. Targets histone H2B for deubiquitination, thus helping to localize SIR2 to the telomere. At silent chromatin, including telomeres and the rDNA locus, not only maintains low H2B 'Lys-123' ubiquitination (H2BK123Ub), but also low H3 'Lys-4' and 'Lys-79' methylation (H3K4me and H3K79me, respectively). Controls the proliferating-cell nuclear antigen PCNA/POL30 deubiquitination which is crucial for keeping TLS polymerases in check as well as for down-regulating the error-free bypass. Deubiquitinates and stabilizes RPA190, the largest subunit of RNA polymerase I, to achieve optimal levels of ribosomes and cell growth. Also protects nutrient transporters such as GAP1 from ubiquitin-dependent endocytosis. This Saccharomyces cerevisiae (strain ATCC 204508 / S288c) (Baker's yeast) protein is Ubiquitin carboxyl-terminal hydrolase 10 (UBP10).